The following is a 373-amino-acid chain: Chorismate synthase (373 aa).

Residue arginine 46 coordinates NADP(+). FMN is bound by residues 123–125 (RSS), 251–252 (NA), glycine 295, 310–314 (KPTPS), and arginine 337.

Belongs to the chorismate synthase family. FMNH2 is required as a cofactor.

The catalysed reaction is 5-O-(1-carboxyvinyl)-3-phosphoshikimate = chorismate + phosphate. Its pathway is metabolic intermediate biosynthesis; chorismate biosynthesis; chorismate from D-erythrose 4-phosphate and phosphoenolpyruvate: step 7/7. Functionally, catalyzes the anti-1,4-elimination of the C-3 phosphate and the C-6 proR hydrogen from 5-enolpyruvylshikimate-3-phosphate (EPSP) to yield chorismate, which is the branch point compound that serves as the starting substrate for the three terminal pathways of aromatic amino acid biosynthesis. This reaction introduces a second double bond into the aromatic ring system. This chain is Chorismate synthase, found in Methanococcus maripaludis (strain DSM 14266 / JCM 13030 / NBRC 101832 / S2 / LL).